Consider the following 211-residue polypeptide: Neuroendocrine protein 7B2 (211 aa).

An N-terminal signal peptide occupies residues 1-26 (MVSRMVSTMLSGLLFWLASGWTPAFA). The tract at residues 106–132 (DFSEDQGYPDPPNPCPVGKTDDGCLEN) is disordered. Cysteine 120 and cysteine 129 are oxidised to a cystine. Residues serine 140 and serine 204 each carry the phosphoserine modification. Residues 173–211 (GGERRKRRSVNPYLQGQRLDNVVAKKSVPHFSDEDKDPE) are disordered.

Belongs to the 7B2 family. As to quaternary structure, interacts with PCSK2/PC2 early in the secretory pathway. Dissociation occurs at later stages. Proteolytically cleaved in the Golgi by a furin-like convertase to generate bioactive peptides. In terms of processing, sulfated on tyrosine residues.

It localises to the secreted. In terms of biological role, acts as a molecular chaperone for PCSK2/PC2, preventing its premature activation in the regulated secretory pathway. Binds to inactive PCSK2 in the endoplasmic reticulum and facilitates its transport from there to later compartments of the secretory pathway where it is proteolytically matured and activated. Also required for cleavage of PCSK2 but does not appear to be involved in its folding. Plays a role in regulating pituitary hormone secretion. The C-terminal peptide inhibits PCSK2 in vitro. The sequence is that of Neuroendocrine protein 7B2 (SCG5) from Pan troglodytes (Chimpanzee).